Here is an 882-residue protein sequence, read N- to C-terminus: Valine--tRNA ligase (882 aa).

A 'HIGH' region motif is present at residues 45–55; it reads PNVTGSLHIGH. The short motif at 525–529 is the 'KMSKS' region element; it reads KFSKS. Position 528 (Lys-528) interacts with ATP. Residues 812–881 are a coiled coil; sequence EGLIDVAKEK…VLKKGIQNLA (70 aa).

Belongs to the class-I aminoacyl-tRNA synthetase family. ValS type 1 subfamily. As to quaternary structure, monomer.

The protein localises to the cytoplasm. The catalysed reaction is tRNA(Val) + L-valine + ATP = L-valyl-tRNA(Val) + AMP + diphosphate. Catalyzes the attachment of valine to tRNA(Val). As ValRS can inadvertently accommodate and process structurally similar amino acids such as threonine, to avoid such errors, it has a 'posttransfer' editing activity that hydrolyzes mischarged Thr-tRNA(Val) in a tRNA-dependent manner. The protein is Valine--tRNA ligase of Leptospira interrogans serogroup Icterohaemorrhagiae serovar Lai (strain 56601).